Reading from the N-terminus, the 302-residue chain is Sulfate adenylyltransferase subunit 2 (302 aa).

The protein belongs to the PAPS reductase family. CysD subfamily. Heterodimer composed of CysD, the smaller subunit, and CysN.

The enzyme catalyses sulfate + ATP + H(+) = adenosine 5'-phosphosulfate + diphosphate. It participates in sulfur metabolism; hydrogen sulfide biosynthesis; sulfite from sulfate: step 1/3. Functionally, with CysN forms the ATP sulfurylase (ATPS) that catalyzes the adenylation of sulfate producing adenosine 5'-phosphosulfate (APS) and diphosphate, the first enzymatic step in sulfur assimilation pathway. APS synthesis involves the formation of a high-energy phosphoric-sulfuric acid anhydride bond driven by GTP hydrolysis by CysN coupled to ATP hydrolysis by CysD. This is Sulfate adenylyltransferase subunit 2 from Aeromonas hydrophila subsp. hydrophila (strain ATCC 7966 / DSM 30187 / BCRC 13018 / CCUG 14551 / JCM 1027 / KCTC 2358 / NCIMB 9240 / NCTC 8049).